The sequence spans 215 residues: Putative lipoprotein NMB1124/NMB1162 (215 aa).

Residues 1–16 (MKPLILGLAAVLALSA) form the signal peptide. Residue cysteine 17 is the site of N-palmitoyl cysteine attachment. Cysteine 17 carries the S-diacylglycerol cysteine lipid modification.

It is found in the cell membrane. This is Putative lipoprotein NMB1124/NMB1162 from Neisseria meningitidis serogroup B (strain ATCC BAA-335 / MC58).